The sequence spans 27 residues: Potassium channel toxin kappa-KTx 2.2 (27 aa).

2 disulfides stabilise this stretch: C3–C21 and C7–C17.

This sequence belongs to the short scorpion toxin superfamily. Potassium channel inhibitor kappa-KTx family. Kappa-KTx 2 subfamily. In terms of tissue distribution, expressed by the venom gland.

It is found in the secreted. OmTx1 decreases the amplitude of the potassium current of the rat channels Kv1.1/KCNA1 by 17% and Kv1.2/KCNA2 by 12% as well as human Kv1.3/KCNA3 by 24%. Functionally, omTx2 decreases the amplitude of the potassium current of the rat channels Kv1.1/KCNA1 by 8% and Kv1.2/KCNA2 by 10% as well as human Kv1.3/KCNA3 by 36%. Also alters glucose-induced insulin release from pancreatic islets. This Opisthacanthus madagascariensis (Scorpion) protein is Potassium channel toxin kappa-KTx 2.2.